The following is a 460-amino-acid chain: tRNA (guanine(37)-N(1))-methyltransferase (460 aa).

S-adenosyl-L-methionine contacts are provided by residues His-204, 243–244 (DL), 271–272 (DA), and Asn-292. Residues 390–428 (ASTTTTPTTSNTNTSTTTSTTSTSTTTTESTNTNNSANN) are compositionally biased toward low complexity. The disordered stretch occupies residues 390–460 (ASTTTTPTTS…SIDTNKKLKN (71 aa)). Positions 442 to 451 (DSNETNETDS) are enriched in acidic residues.

It belongs to the class I-like SAM-binding methyltransferase superfamily. TRM5/TYW2 family. As to quaternary structure, monomer.

It localises to the mitochondrion matrix. The protein resides in the nucleus. It is found in the cytoplasm. It catalyses the reaction guanosine(37) in tRNA + S-adenosyl-L-methionine = N(1)-methylguanosine(37) in tRNA + S-adenosyl-L-homocysteine + H(+). In terms of biological role, specifically methylates the N1 position of guanosine-37 in various cytoplasmic and mitochondrial tRNAs. Methylation is not dependent on the nature of the nucleoside 5' of the target nucleoside. This is the first step in the biosynthesis of wybutosine (yW), a modified base adjacent to the anticodon of tRNAs and required for accurate decoding. This is tRNA (guanine(37)-N(1))-methyltransferase (trmt5) from Dictyostelium discoideum (Social amoeba).